We begin with the raw amino-acid sequence, 628 residues long: MYRFSDYDVIVVGAGHAGIEAALASARMGEAVLLITQTLDSAGRLSCNPSIGGISKGNIVREIDALGGEMGKLADASMIQYRLLNKSRGPAVQAPRVQADKFLYSQLAKHAIELEKNLHVFQDTVIDIVSSNTNESGYVEKGSVQYVKTERGREFSAKAVVLATGTFMEGKIYIGEYESPDGRLGERAAIGLGPALAKKGFTVGRLKTGTPMRILRRSFDSSLTEEQEADEIMRPFSFSNAEIHRPYAKCYITHTNQETHDIIRENLHRAALFSGKITGTGARYCPSIEDKIKKFPERDRHHVYIEPEGLNTEELYINGLSSSLPEDVQDRMIRTIPCFKDVIITRPAYAVDYAYVSPIQLSSDLQTRRIEGLFLAGQINGTSGYEEAGGQGIIAGINAALFSRSLKFKDEKYVPFVLKRDEAYIGVMIDDLVTQGVDEPYRMFTARAEYRLNLRHDTADERLTERAYQIGLQTKEASNRLKEKLLTREKIISLWKDIKITRDLIAKNPELKNHIGKSLADALHDPQVSLECICAIDENSKDYSAELLESAELEIRYEHYIAVQNRKIAKVKRMENTKIPADFDYDAVSGLSTESRTRLKEVRPETIGQASRIRGIRPSDIMLLSILL.

Residue 13 to 18 coordinates FAD; sequence GAGHAG. 281-295 contributes to the NAD(+) binding site; it reads GARYCPSIEDKIKKF.

The protein belongs to the MnmG family. Homodimer. Heterotetramer of two MnmE and two MnmG subunits. FAD serves as cofactor.

The protein localises to the cytoplasm. In terms of biological role, NAD-binding protein involved in the addition of a carboxymethylaminomethyl (cmnm) group at the wobble position (U34) of certain tRNAs, forming tRNA-cmnm(5)s(2)U34. The protein is tRNA uridine 5-carboxymethylaminomethyl modification enzyme MnmG of Treponema denticola (strain ATCC 35405 / DSM 14222 / CIP 103919 / JCM 8153 / KCTC 15104).